The chain runs to 262 residues: MQPDLHSRALAAHTLQQFRILSPLTHCMTNDVVQNFTANTLLASGASPAMVIEPEEARQFAAIASALLINVGTLTRSRAEAMRAATEQAHIAKTPWTLDPVAVGALDYRRRFCLELLSLKPRAIRGNASEILALAGLAAGGRGVDTTDTAVSALPAAQALARQTGAVVAVTGEVDYVTDGQRTVSVTGGDVLMTRVVGTGCALSAVVAASCALPGNTLDNVASACSWMKQAGQSAAERSQGPGSFIPAFLDALYHLNAEEQV.

Methionine 50 serves as a coordination point for substrate. ATP is bound by residues arginine 125 and threonine 171. Glycine 198 is a substrate binding site.

It belongs to the Thz kinase family. The cofactor is Mg(2+).

It carries out the reaction 5-(2-hydroxyethyl)-4-methylthiazole + ATP = 4-methyl-5-(2-phosphooxyethyl)-thiazole + ADP + H(+). The protein operates within cofactor biosynthesis; thiamine diphosphate biosynthesis; 4-methyl-5-(2-phosphoethyl)-thiazole from 5-(2-hydroxyethyl)-4-methylthiazole: step 1/1. Catalyzes the phosphorylation of the hydroxyl group of 4-methyl-5-beta-hydroxyethylthiazole (THZ). This chain is Hydroxyethylthiazole kinase, found in Citrobacter koseri (strain ATCC BAA-895 / CDC 4225-83 / SGSC4696).